A 316-amino-acid polypeptide reads, in one-letter code: MSTVQVPKLNTKDLLTLEELTKEEIISLIEFAIHLKKNKQEPLLQGKILGLIFDKHSTRTRVSFEAGMVQLGGHGMFLSGKEMQMGRGETVSDTAKVLSQYIDGIMIRTFSHADVEELAKESSIPVINGLTDDHHPCQALADLMTIYEETNTFKGIKLAYVGDGNNVCHSLLLASAKVGMHMTVATPVGYEPNEEIVKKALAIAKETGAEIEVLHDPELAVNEADFIYTDVWMSMGQEGEEEKYTLFQPYQINKELVTHAKQTYRFLHCLPAHREEEVTGEIIDGPQSIVFEQAGNRLHAQKALLVSLFKSVEELS.

Carbamoyl phosphate-binding positions include 57 to 60 (STRT), Q84, R108, and 135 to 138 (HPCQ). L-ornithine contacts are provided by residues N166, D230, and 234–235 (SM). Residues 269-270 (CL) and R297 each bind carbamoyl phosphate.

It belongs to the aspartate/ornithine carbamoyltransferase superfamily. OTCase family.

It is found in the cytoplasm. The enzyme catalyses carbamoyl phosphate + L-ornithine = L-citrulline + phosphate + H(+). It participates in amino-acid biosynthesis; L-arginine biosynthesis; L-arginine from L-ornithine and carbamoyl phosphate: step 1/3. Functionally, reversibly catalyzes the transfer of the carbamoyl group from carbamoyl phosphate (CP) to the N(epsilon) atom of ornithine (ORN) to produce L-citrulline. In Bacillus thuringiensis subsp. konkukian (strain 97-27), this protein is Ornithine carbamoyltransferase.